A 273-amino-acid chain; its full sequence is NADPH-dependent 7-cyano-7-deazaguanine reductase (273 aa).

A substrate-binding site is contributed by Val-80–Ser-82. Ser-82–Lys-83 contacts NADPH. Cys-180 (thioimide intermediate) is an active-site residue. Asp-187 serves as the catalytic Proton donor. His-219–Glu-220 provides a ligand contact to substrate. Arg-248–Gly-249 contributes to the NADPH binding site.

The protein belongs to the GTP cyclohydrolase I family. QueF type 2 subfamily. As to quaternary structure, homodimer.

Its subcellular location is the cytoplasm. The catalysed reaction is 7-aminomethyl-7-carbaguanine + 2 NADP(+) = 7-cyano-7-deazaguanine + 2 NADPH + 3 H(+). It functions in the pathway tRNA modification; tRNA-queuosine biosynthesis. In terms of biological role, catalyzes the NADPH-dependent reduction of 7-cyano-7-deazaguanine (preQ0) to 7-aminomethyl-7-deazaguanine (preQ1). This is NADPH-dependent 7-cyano-7-deazaguanine reductase from Bordetella bronchiseptica (strain ATCC BAA-588 / NCTC 13252 / RB50) (Alcaligenes bronchisepticus).